Reading from the N-terminus, the 457-residue chain is Proton-translocating ferredoxin:NAD(+) oxidoreductase complex subunit C (457 aa).

2 4Fe-4S ferredoxin-type domains span residues 353–386 and 396–427; these read TKND…MLSI and AKEE…YIRY. Residues C365, C368, C371, C375, C405, C408, C411, and C415 each contribute to the [4Fe-4S] cluster site. A disordered region spans residues 433–457; sequence RAAGEREKAKAAKAKEKKEKEEVLK.

Belongs to the 4Fe4S bacterial-type ferredoxin family. RnfC subfamily. As to quaternary structure, the complex is composed of six subunits: RnfA, RnfB, RnfC, RnfD, RnfE and RnfG. [4Fe-4S] cluster serves as cofactor.

The protein localises to the cell membrane. Functionally, part of a membrane-bound complex that couples electron transfer with translocation of ions across the membrane. Couples electron transfer from reduced ferredoxin to NAD(+) with translocation of H(+) out of the cell. Essential for energy conservation during autotrophic growth. Contributes to ATP synthesis during heterotrophic growth. The polypeptide is Proton-translocating ferredoxin:NAD(+) oxidoreductase complex subunit C (Clostridium ljungdahlii (strain ATCC 55383 / DSM 13528 / PETC)).